Here is a 129-residue protein sequence, read N- to C-terminus: MIVLDASAAVELMLTTPAGAAVARRLRGETVHAPAHFDVEVIGAIRQAVVRQLISDHEGLVVVVNFLSLPVRRWPLKPFTQRAYQLRSTHTVADGAYVALAEGLGVPLITCDGRLAQSHGHNAEIELVA.

Positions 5 and 94 each coordinate Mg(2+).

The protein belongs to the PINc/VapC protein family. Requires Mg(2+) as cofactor.

In terms of biological role, toxic component of a type II toxin-antitoxin (TA) system. An RNase. The cognate antitoxin is VapB12. The sequence is that of Ribonuclease VapC12 from Mycobacterium tuberculosis (strain CDC 1551 / Oshkosh).